We begin with the raw amino-acid sequence, 338 residues long: Lipoate-protein ligase A (338 aa).

The BPL/LPL catalytic domain maps to 29-216; sequence PATQRVLFLW…AFFAHYGERV (188 aa). ATP-binding positions include arginine 71, 76–79, and lysine 134; that span reads GAVF. (R)-lipoate is bound at residue lysine 134.

It belongs to the LplA family. In terms of assembly, monomer.

It is found in the cytoplasm. The catalysed reaction is L-lysyl-[lipoyl-carrier protein] + (R)-lipoate + ATP = N(6)-[(R)-lipoyl]-L-lysyl-[lipoyl-carrier protein] + AMP + diphosphate + H(+). The protein operates within protein modification; protein lipoylation via exogenous pathway; protein N(6)-(lipoyl)lysine from lipoate: step 1/2. It functions in the pathway protein modification; protein lipoylation via exogenous pathway; protein N(6)-(lipoyl)lysine from lipoate: step 2/2. Catalyzes both the ATP-dependent activation of exogenously supplied lipoate to lipoyl-AMP and the transfer of the activated lipoyl onto the lipoyl domains of lipoate-dependent enzymes. This chain is Lipoate-protein ligase A, found in Escherichia coli O81 (strain ED1a).